Here is a 260-residue protein sequence, read N- to C-terminus: MTKTLTKHLQAIKDSKRGIFVPYIMAGDHAKGLDGLFETITLLENSGVSAIEVGIPWSDPVADGPIIELAGQRSLAKDVTLTAIIKKLQEKKTQVPLVIMTYINPVYQYGIEAFVKDLAETSVKGLIIPDLPNEHADFITPYLRDSDIALVPLVSLTTGIDRQKQLIDGAEGFIYAVAINGVTGKTGNYRDDLDKHLSNLTAYADIPVLTGFGVSTEEDIKRFNAVSDGVIVGSKIVRDLHDGKEEEVAEFVTFGSHFEK.

Residues Glu52 and Asp63 each act as proton acceptor in the active site.

This sequence belongs to the TrpA family. In terms of assembly, tetramer of two alpha and two beta chains.

It catalyses the reaction (1S,2R)-1-C-(indol-3-yl)glycerol 3-phosphate + L-serine = D-glyceraldehyde 3-phosphate + L-tryptophan + H2O. It functions in the pathway amino-acid biosynthesis; L-tryptophan biosynthesis; L-tryptophan from chorismate: step 5/5. Functionally, the alpha subunit is responsible for the aldol cleavage of indoleglycerol phosphate to indole and glyceraldehyde 3-phosphate. This is Tryptophan synthase alpha chain from Streptococcus thermophilus (strain ATCC BAA-250 / LMG 18311).